Here is a 259-residue protein sequence, read N- to C-terminus: Thiazole synthase (259 aa).

The Schiff-base intermediate with DXP role is filled by Lys100. 1-deoxy-D-xylulose 5-phosphate-binding positions include Gly161, 187–188, and 209–210; these read AG and NT.

Belongs to the ThiG family. As to quaternary structure, homotetramer. Forms heterodimers with either ThiH or ThiS.

It is found in the cytoplasm. It carries out the reaction [ThiS sulfur-carrier protein]-C-terminal-Gly-aminoethanethioate + 2-iminoacetate + 1-deoxy-D-xylulose 5-phosphate = [ThiS sulfur-carrier protein]-C-terminal Gly-Gly + 2-[(2R,5Z)-2-carboxy-4-methylthiazol-5(2H)-ylidene]ethyl phosphate + 2 H2O + H(+). The protein operates within cofactor biosynthesis; thiamine diphosphate biosynthesis. In terms of biological role, catalyzes the rearrangement of 1-deoxy-D-xylulose 5-phosphate (DXP) to produce the thiazole phosphate moiety of thiamine. Sulfur is provided by the thiocarboxylate moiety of the carrier protein ThiS. In vitro, sulfur can be provided by H(2)S. The protein is Thiazole synthase of Methylobacillus flagellatus (strain ATCC 51484 / DSM 6875 / VKM B-1610 / KT).